The primary structure comprises 193 residues: 3-isopropylmalate dehydratase small subunit (193 aa).

The protein belongs to the LeuD family. LeuD type 1 subfamily. In terms of assembly, heterodimer of LeuC and LeuD.

It carries out the reaction (2R,3S)-3-isopropylmalate = (2S)-2-isopropylmalate. It functions in the pathway amino-acid biosynthesis; L-leucine biosynthesis; L-leucine from 3-methyl-2-oxobutanoate: step 2/4. Its function is as follows. Catalyzes the isomerization between 2-isopropylmalate and 3-isopropylmalate, via the formation of 2-isopropylmaleate. This chain is 3-isopropylmalate dehydratase small subunit, found in Bacillus cereus (strain B4264).